The following is a 407-amino-acid chain: Growth/differentiation factor 11 (407 aa).

The N-terminal stretch at 1 to 24 is a signal peptide; sequence MVLAAPLLLGFLLLALELRPRGEA. Positions 25–298 are excised as a propeptide; it reads AEGPAAAAAA…VLENTKRSRR (274 aa). N94 is a glycosylation site (N-linked (GlcNAc...) asparagine). Intrachain disulfides connect C304–C314, C313–C372, C341–C404, and C345–C406.

The protein belongs to the TGF-beta family. In terms of assembly, homodimer; disulfide-linked. Interacts directly with ACVR2B. Interacts directly with ACVR2A. Interacts with ACVR1B, TGFBR1 and ACVR1C in an ACVR2B-dependent manner. Interacts with FST isoform 2/FS-288. In terms of processing, synthesized as large precursor molecule that undergoes proteolytic cleavage by furin-like proteases. This produces an inactive form consisting of the mature C-terminal portion non-covalently bound to its cleaved N-terminal propeptide. Activation of the mature form requires additional cleavage of the propeptide by a tolloid-like metalloproteinase. In terms of tissue distribution, in the embryo, strong expression is seen in the palatal epithelia, including the medial edge epithelial and midline epithelial seam of the palatal shelves. Less pronounced expression is also seen throughout the palatal shelf and tongue mesenchyme.

The protein resides in the secreted. Secreted signal that acts globally to regulate anterior/posterior axial patterning during development. May play critical roles in patterning both mesodermal and neural tissues. It is required for proper vertebral patterning and orofacial development. Signals through activin receptors type-2, ACVR2A and ACVR2B, and activin receptors type-1, ACVR1B, ACVR1C and TGFBR1 leading to the phosphorylation of SMAD2 and SMAD3. This Homo sapiens (Human) protein is Growth/differentiation factor 11 (GDF11).